The primary structure comprises 123 residues: Small ribosomal subunit protein uS12cz/uS12cy (123 aa).

The protein belongs to the universal ribosomal protein uS12 family. In terms of assembly, part of the 30S ribosomal subunit.

Its subcellular location is the plastid. The protein resides in the chloroplast. Its function is as follows. With S4 and S5 plays an important role in translational accuracy. Located at the interface of the 30S and 50S subunits. The polypeptide is Small ribosomal subunit protein uS12cz/uS12cy (rps12-A) (Daucus carota (Wild carrot)).